The chain runs to 133 residues: uncharacterized protein (133 aa).

The tract at residues 44 to 79 is disordered; it reads VENQLASSKTEEQTLKISKKSNLNPAQKSSTFGLEN. A compositionally biased stretch (polar residues) spans 63–79; the sequence is KSNLNPAQKSSTFGLEN.

The protein resides in the plastid. It localises to the chloroplast. This is an uncharacterized protein from Chlorella vulgaris (Green alga).